Here is a 59-residue protein sequence, read N- to C-terminus: MRIKVKLVRGLAGKRKDQIKAVRSLGLKKVNDERILEKNPMVLGNINKVKHLIQVEEVE.

This sequence belongs to the universal ribosomal protein uL30 family. Part of the 50S ribosomal subunit.

This chain is Large ribosomal subunit protein uL30, found in Persephonella marina (strain DSM 14350 / EX-H1).